Here is a 440-residue protein sequence, read N- to C-terminus: NADH-quinone oxidoreductase subunit D (440 aa).

This sequence belongs to the complex I 49 kDa subunit family. As to quaternary structure, NDH-1 is composed of 14 different subunits. Subunits NuoB, C, D, E, F, and G constitute the peripheral sector of the complex.

It is found in the cell membrane. It carries out the reaction a quinone + NADH + 5 H(+)(in) = a quinol + NAD(+) + 4 H(+)(out). NDH-1 shuttles electrons from NADH, via FMN and iron-sulfur (Fe-S) centers, to quinones in the respiratory chain. The immediate electron acceptor for the enzyme in this species is believed to be a menaquinone. Couples the redox reaction to proton translocation (for every two electrons transferred, four hydrogen ions are translocated across the cytoplasmic membrane), and thus conserves the redox energy in a proton gradient. This Acidothermus cellulolyticus (strain ATCC 43068 / DSM 8971 / 11B) protein is NADH-quinone oxidoreductase subunit D.